A 144-amino-acid chain; its full sequence is uncharacterized protein (144 aa).

Residues 48–119 (ELNKLKAKAD…KETEEPKMEL (72 aa)) adopt a coiled-coil conformation.

This is an uncharacterized protein from Archaeoglobus fulgidus (strain ATCC 49558 / DSM 4304 / JCM 9628 / NBRC 100126 / VC-16).